Reading from the N-terminus, the 290-residue chain is MPFDFRRFDIYRKVPKDLTQPTYTGAIISICCCLFILFLFLSELTGFITTEVVNELYVDDPDKDSGGKIDVSLNISLPNLHCELVGLDIQDEMGRHEVGHIDNSMKIPLNNGAGCRFEGQFSINKVPGNFHVSTHSATAQPQNPDMTHTIHKLSFGDTLQVQNVHGAFNALGGADRLTSNPLASHDYILKIVPTVYEDKSGKQRYSYQYTVANKEYVAYSHTGRIIPAIWFRYDLSPITVKYTERRQPLYRFITTICAIIGGTFTVAGILDSCIFTASEAWKKIQLGKIH.

Over Met1 to Ala26 the chain is Cytoplasmic. A helical membrane pass occupies residues Ile27 to Phe47. Over Ile48–Thr254 the chain is Lumenal. An N-linked (GlcNAc...) asparagine glycan is attached at Asn74. The chain crosses the membrane as a helical span at residues Thr255–Phe275. At Thr276–His290 the chain is on the cytoplasmic side.

It belongs to the ERGIC family. In terms of assembly, may form a heteromeric complex composed of ERGIC1, ERGIC2 and ERGIC3. Within the complex, the interaction with ERGIC3 is direct. Interacts with ERGIC3/ERV46. In terms of processing, N-glycosylated.

The protein resides in the endoplasmic reticulum membrane. It localises to the endoplasmic reticulum-Golgi intermediate compartment membrane. The protein localises to the golgi apparatus membrane. Its function is as follows. Possible role in transport between endoplasmic reticulum and Golgi. The polypeptide is Endoplasmic reticulum-Golgi intermediate compartment protein 1 (Ergic1) (Mus musculus (Mouse)).